Here is a 164-residue protein sequence, read N- to C-terminus: Crossover junction endodeoxyribonuclease RuvC (164 aa).

Active-site residues include aspartate 7, glutamate 67, and aspartate 140. Positions 7, 67, and 140 each coordinate Mg(2+).

Belongs to the RuvC family. In terms of assembly, homodimer which binds Holliday junction (HJ) DNA. The HJ becomes 2-fold symmetrical on binding to RuvC with unstacked arms; it has a different conformation from HJ DNA in complex with RuvA. In the full resolvosome a probable DNA-RuvA(4)-RuvB(12)-RuvC(2) complex forms which resolves the HJ. The cofactor is Mg(2+).

It localises to the cytoplasm. The enzyme catalyses Endonucleolytic cleavage at a junction such as a reciprocal single-stranded crossover between two homologous DNA duplexes (Holliday junction).. Its function is as follows. The RuvA-RuvB-RuvC complex processes Holliday junction (HJ) DNA during genetic recombination and DNA repair. Endonuclease that resolves HJ intermediates. Cleaves cruciform DNA by making single-stranded nicks across the HJ at symmetrical positions within the homologous arms, yielding a 5'-phosphate and a 3'-hydroxyl group; requires a central core of homology in the junction. The consensus cleavage sequence is 5'-(A/T)TT(C/G)-3'. Cleavage occurs on the 3'-side of the TT dinucleotide at the point of strand exchange. HJ branch migration catalyzed by RuvA-RuvB allows RuvC to scan DNA until it finds its consensus sequence, where it cleaves and resolves the cruciform DNA. This chain is Crossover junction endodeoxyribonuclease RuvC, found in Chloroflexus aurantiacus (strain ATCC 29364 / DSM 637 / Y-400-fl).